The sequence spans 652 residues: Endoplasmic reticulum chaperone BiP (652 aa).

The first 16 residues, 1–16, serve as a signal peptide directing secretion; sequence MRHLLLALLLLGGARA. ATP is bound by residues 34 to 37, K94, 225 to 227, 291 to 298, and 362 to 365; these read GTTY, GGT, EKAKRALS, and GSTR. The nucleotide-binding (NBD) stretch occupies residues 123 to 278; the sequence is KPHIQVDVGG…KKKTGKDVRK (156 aa). Residues 407 to 417 are interdomain linker; it reads QDTGDLVLLDV. A substrate-binding (SBD) region spans residues 418–498; that stretch reads CPLTLGIETV…PRGVPQIEVT (81 aa). Residues 630-652 form a disordered region; that stretch reads SKLYGSAGPPPTGEEEAAEKDEL. A compositionally biased stretch (acidic residues) spans 642–652; that stretch reads GEEEAAEKDEL. The Prevents secretion from ER signature appears at 649–652; that stretch reads KDEL.

It belongs to the heat shock protein 70 family. Monomer and homooligomer; homooligomerization via the interdomain linker inactivates the chaperone activity and acts as a storage of HSPA5/BiP molecules. Interacts with DNAJC10. Interacts with DNAJB9/ERdj4; leading to recruit HSPA5/BiP to ERN1/IRE1. Interacts with ERN1/IRE1; interaction takes place following interaction with DNAJB9/ERdj4 and leads to inactivate ERN1/IRE1.

The protein localises to the endoplasmic reticulum lumen. It localises to the melanosome. It is found in the cytoplasm. The protein resides in the cell surface. The enzyme catalyses ATP + H2O = ADP + phosphate + H(+). Its activity is regulated as follows. The chaperone activity is regulated by ATP-induced allosteric coupling of the nucleotide-binding (NBD) and substrate-binding (SBD) domains. In the ADP-bound and nucleotide-free (apo) states, the two domains have little interaction. In contrast, in the ATP-bound state the two domains are tightly coupled, which results in drastically accelerated kinetics in both binding and release of polypeptide substrates. J domain-containing co-chaperones (DNAJB9/ERdj4 or DNAJC10/ERdj5) stimulate the ATPase activity and are required for efficient substrate recognition by HSPA5/BiP. Homooligomerization inactivates participating HSPA5/BiP protomers and probably act as reservoirs to store HSPA5/BiP molecules when they are not needed by the cell. Functionally, endoplasmic reticulum chaperone that plays a key role in protein folding and quality control in the endoplasmic reticulum lumen. Involved in the correct folding of proteins and degradation of misfolded proteins via its interaction with DNAJC10/ERdj5, probably to facilitate the release of DNAJC10/ERdj5 from its substrate. Acts as a key repressor of the EIF2AK3/PERK and ERN1/IRE1-mediated unfolded protein response (UPR). In the unstressed endoplasmic reticulum, recruited by DNAJB9/ERdj4 to the luminal region of ERN1/IRE1, leading to disrupt the dimerization of ERN1/IRE1, thereby inactivating ERN1/IRE1. Also binds and inactivates EIF2AK3/PERK in unstressed cells. Accumulation of misfolded protein in the endoplasmic reticulum causes release of HSPA5/BiP from ERN1/IRE1 and EIF2AK3/PERK, allowing their homodimerization and subsequent activation. May also play a role in apoptosis and cell proliferation. The protein is Endoplasmic reticulum chaperone BiP of Gallus gallus (Chicken).